A 203-amino-acid polypeptide reads, in one-letter code: Outer-membrane lipoprotein carrier protein (203 aa).

A signal peptide spans M1–A21. Positions Q178 to K203 are disordered.

Belongs to the LolA family. As to quaternary structure, monomer.

Its subcellular location is the periplasm. Functionally, participates in the translocation of lipoproteins from the inner membrane to the outer membrane. Only forms a complex with a lipoprotein if the residue after the N-terminal Cys is not an aspartate (The Asp acts as a targeting signal to indicate that the lipoprotein should stay in the inner membrane). This chain is Outer-membrane lipoprotein carrier protein, found in Salmonella paratyphi A (strain ATCC 9150 / SARB42).